A 48-amino-acid chain; its full sequence is uncharacterized protein (48 aa).

Residues 18-38 (IIIKYWYIDLTITIFAFLILY) form a helical membrane-spanning segment.

It is found in the host membrane. This is an uncharacterized protein from Acidianus bottle-shaped virus (isolate Italy/Pozzuoli) (ABV).